A 460-amino-acid chain; its full sequence is 5-hydroxytryptamine receptor 2C (460 aa).

A signal peptide spans 1-32 (MVNLGNAVRSLLMHLIGLLVWQFDISISPVAA). At 33–56 (IVTDTFNSSDGGRLFQFPDGVQNW) the chain is on the extracellular side. A helical membrane pass occupies residues 57–81 (PALSIVVIIIMTIGGNILVIMAVSM). Topologically, residues 82-87 (EKKLHN) are cytoplasmic. The helical transmembrane segment at 88–112 (ATNYFLMSLAIADMLVGLLVMPLSL) threads the bilayer. The Extracellular segment spans residues 113–129 (LAILYDYVWPLPRYLCP). Cys128 and Cys208 form a disulfide bridge. Residues 130 to 152 (VWISLDVLFSTASIMHLCAISLD) form a helical membrane-spanning segment. Ergotamine is bound at residue Thr140. The DRY motif; important for ligand-induced conformation changes signature appears at 152–154 (DRY). Residues 153–168 (RYVAIRNPIEHSRFNS) are Cytoplasmic-facing. The chain crosses the membrane as a helical span at residues 169–190 (RTKAIMKIAIVWAISIGVSVPI). Residues 191–214 (PVIGLRDESKVFVNNTTCVLNDPN) are Extracellular-facing. Residues Asn204 and Asn205 are each glycosylated (N-linked (GlcNAc...) asparagine). Position 210 (Leu210) interacts with ergotamine. Residues 215–237 (FVLIGSFVAFFIPLTIMVITYFL) form a helical membrane-spanning segment. Residues 238 to 313 (TIYVLRRQTL…AINNEKKASK (76 aa)) are Cytoplasmic-facing. The segment at 276 to 301 (EEENAPNPNPDQKPRRKKKEKRPRGT) is disordered. The span at 289-299 (PRRKKKEKRPR) shows a compositional bias: basic residues. The helical transmembrane segment at 314–338 (VLGIVFFVFLIMWCPFFITNILSVL) threads the bilayer. Cysteines 339 and 343 form a disulfide. The Extracellular segment spans residues 339–349 (CGKACNQKLME). Residues 350-372 (KLLNVFVWIGYVCSGINPLVYTL) form a helical membrane-spanning segment. The NPxxY motif; important for ligand-induced conformation changes and signaling motif lies at 366–370 (NPLVY). At 373-460 (FNKIYRRAFS…NVVSERISSV (88 aa)) the chain is on the cytoplasmic side. The PDZ-binding motif lies at 458 to 460 (SSV).

Belongs to the G-protein coupled receptor 1 family. In terms of assembly, interacts with MPDZ. Interacts with ARRB2. Interacts with MPP3; this interaction stabilizes the receptor at the plasma membrane and prevents the desensitization of the HTR2C receptor-mediated calcium response.

The protein resides in the cell membrane. In terms of biological role, G-protein coupled receptor for 5-hydroxytryptamine (serotonin). Also functions as a receptor for various drugs and psychoactive substances, including ergot alkaloid derivatives, 1-2,5,-dimethoxy-4-iodophenyl-2-aminopropane (DOI) and lysergic acid diethylamide (LSD). Ligand binding causes a conformation change that triggers signaling via guanine nucleotide-binding proteins (G proteins) and modulates the activity of downstream effectors. HTR2C is coupled to G(q)/G(11) G alpha proteins and activates phospholipase C-beta, releasing diacylglycerol (DAG) and inositol 1,4,5-trisphosphate (IP3) second messengers that modulate the activity of phosphatidylinositol 3-kinase and promote the release of Ca(2+) ions from intracellular stores, respectively. Beta-arrestin family members inhibit signaling via G proteins and mediate activation of alternative signaling pathways. Regulates neuronal activity via the activation of short transient receptor potential calcium channels in the brain, and thereby modulates the activation of pro-opiomelanocortin neurons and the release of CRH that then regulates the release of corticosterone. Plays a role in the regulation of appetite and eating behavior, responses to anxiogenic stimuli and stress. Plays a role in insulin sensitivity and glucose homeostasis. This chain is 5-hydroxytryptamine receptor 2C, found in Rattus norvegicus (Rat).